A 141-amino-acid chain; its full sequence is Large ribosomal subunit protein uL11 (141 aa).

It belongs to the universal ribosomal protein uL11 family. In terms of assembly, part of the ribosomal stalk of the 50S ribosomal subunit. Interacts with L10 and the large rRNA to form the base of the stalk. L10 forms an elongated spine to which L12 dimers bind in a sequential fashion forming a multimeric L10(L12)X complex. In terms of processing, one or more lysine residues are methylated.

Functionally, forms part of the ribosomal stalk which helps the ribosome interact with GTP-bound translation factors. This Chloroflexus aggregans (strain MD-66 / DSM 9485) protein is Large ribosomal subunit protein uL11.